Here is a 488-residue protein sequence, read N- to C-terminus: Proline--tRNA ligase (488 aa).

The protein belongs to the class-II aminoacyl-tRNA synthetase family. ProS type 3 subfamily. In terms of assembly, homodimer.

The protein localises to the cytoplasm. It catalyses the reaction tRNA(Pro) + L-proline + ATP = L-prolyl-tRNA(Pro) + AMP + diphosphate. Catalyzes the attachment of proline to tRNA(Pro) in a two-step reaction: proline is first activated by ATP to form Pro-AMP and then transferred to the acceptor end of tRNA(Pro). The sequence is that of Proline--tRNA ligase from Pyrobaculum islandicum (strain DSM 4184 / JCM 9189 / GEO3).